We begin with the raw amino-acid sequence, 399 residues long: Protein DDI1 homolog 2 (399 aa).

Residues 1–81 (MLLTVYCVRR…VILRQKENAD (81 aa)) form the Ubiquitin-like domain. The disordered stretch occupies residues 99 to 134 (IAVPGTSSPRQRQPPGTQQSHSSPGEITSSPQGLDN). The segment covering 103–131 (GTSSPRQRQPPGTQQSHSSPGEITSSPQG) has biased composition (polar residues). Threonine 104 carries the phosphothreonine modification. 5 positions are modified to phosphoserine: serine 106, serine 121, serine 128, serine 150, and serine 194. Residue aspartate 252 is part of the active site. The Ubiquitin-binding signature appears at 376–395 (EEIADQELAEALQKSAEDAE).

It belongs to the DDI1 family. As to quaternary structure, homodimer. Interacts with MCM6; PCNA; PSMD4; PSMD8; RPA2 and RPN2. Interacts with RTF2.

The protein localises to the cytoplasm. It is found in the cytosol. The protein resides in the chromosome. In terms of biological role, aspartic protease that mediates the cleavage of NFE2L1/NRF1 at 'Leu-104', thereby promoting release of NFE2L1/NRF1 from the endoplasmic reticulum membrane. Ubiquitination of NFE2L1/NRF1 is a prerequisite for cleavage, suggesting that DDI2 specifically recognizes and binds ubiquitinated NFE2L1/NRF1. Seems to act as a proteasomal shuttle which links the proteasome and replication fork proteins like RTF2. Required, with DDI1, for cellular survival following replication stress. Together or redudantly with DDI1, removes RTF2 from stalled forks to allow cell cycle progression after replication stress and maintains genome integrity. The protein is Protein DDI1 homolog 2 of Homo sapiens (Human).